The following is a 314-amino-acid chain: Vacuolar membrane protein SCY_4732 (314 aa).

The interval 32–61 (KPTSSVVSETSSKSLPSLTSSAFSTSSGTT) is disordered. Residues 93–113 (VYIAVGAVIGAIFISILIWWL) form a helical membrane-spanning segment. Residues Ser148, Ser254, and Ser274 each carry the phosphoserine modification. Residues 240-309 (EERKLNLNRP…PSMFLDDVLN (70 aa)) are disordered. A compositionally biased stretch (basic and acidic residues) spans 254-269 (SPERKEKKINSMEGYH).

This sequence belongs to the PRM5 family.

It localises to the vacuole membrane. In Saccharomyces cerevisiae (strain YJM789) (Baker's yeast), this protein is Vacuolar membrane protein SCY_4732.